The following is a 194-amino-acid chain: MEFPDLGKHCSEKTCKQLDFLPVKCDACKQDFCKDHFTYAAHKCPFAFQKDVHVPVCPLCNTPIPVKKGQIPDVVVGDHIDRDCDSHPGKKKEKIFTYRCSKEGCKKKEMLQMSCAQCHGNFCIQHRHPLDHSCRHGSRPTIKAGCSPVTASESKPSGDPHPGSWRAVPATQVLVHPAHVNAVTSVWGAAALGW.

2 consecutive AN1-type zinc fingers follow at residues P4–V52 and K94–I142. Residues C10, C15, C25, C28, C33, H36, H42, C44, C100, C105, C115, C118, C123, H126, H132, and C134 each coordinate Zn(2+). Residues G145 to S164 are disordered.

It is found in the cytoplasm. The protein localises to the nucleus. The protein is AN1-type zinc finger protein 2A (ZFAND2A) of Pongo abelii (Sumatran orangutan).